Here is a 588-residue protein sequence, read N- to C-terminus: 2-(3-amino-3-carboxypropyl)histidine synthase subunit 2 (588 aa).

[4Fe-4S] cluster contacts are provided by Cys-149, Cys-170, and Cys-402. 2 disordered regions span residues 454–485 (DERN…VTGQ) and 546–588 (GLGS…TKFQ). Residues 466–477 (DNNEEDSDDEAP) show a composition bias toward acidic residues. Positions 579-588 (YDYDRETKFQ) are enriched in basic and acidic residues.

Belongs to the DPH1/DPH2 family. DPH2 subfamily. As to quaternary structure, component of the 2-(3-amino-3-carboxypropyl)histidine synthase complex composed of DPH1, DPH2, DPH3 and a NADH-dependent reductase, predominantly CBR1. Requires [4Fe-4S] cluster as cofactor.

Its subcellular location is the cytoplasm. It participates in protein modification; peptidyl-diphthamide biosynthesis. Its function is as follows. Required for the first step of diphthamide biosynthesis, a post-translational modification of histidine which occurs in elongation factor 2. DPH1 and DPH2 transfer a 3-amino-3-carboxypropyl (ACP) group from S-adenosyl-L-methionine (SAM) to a histidine residue, the reaction is assisted by a reduction system comprising DPH3 and a NADH-dependent reductase, predominantly CBR1. Facilitates the reduction of the catalytic iron-sulfur cluster found in the DPH1 subunit. This is 2-(3-amino-3-carboxypropyl)histidine synthase subunit 2 (DPH2) from Debaryomyces hansenii (strain ATCC 36239 / CBS 767 / BCRC 21394 / JCM 1990 / NBRC 0083 / IGC 2968) (Yeast).